The sequence spans 317 residues: Glucokinase (317 aa).

This sequence belongs to the ROK (NagC/XylR) family. In terms of assembly, homodimer. Requires a divalent metal cation as cofactor.

The enzyme catalyses D-glucose + ATP = D-glucose 6-phosphate + ADP + H(+). Catalyzes the phosphorylation of D-glucose to D-glucose 6-phosphate using ATP as the phosphate donor. Can also phosphorylate 2-deoxyglucose, with lower efficiency. ITP can also serve as a phosphoryl donor. The polypeptide is Glucokinase (Thermotoga maritima (strain ATCC 43589 / DSM 3109 / JCM 10099 / NBRC 100826 / MSB8)).